We begin with the raw amino-acid sequence, 190 residues long: Nucleoside triphosphate pyrophosphatase (190 aa).

The Proton acceptor role is filled by aspartate 69.

Belongs to the Maf family. A divalent metal cation serves as cofactor.

The protein resides in the cytoplasm. It carries out the reaction a ribonucleoside 5'-triphosphate + H2O = a ribonucleoside 5'-phosphate + diphosphate + H(+). The enzyme catalyses a 2'-deoxyribonucleoside 5'-triphosphate + H2O = a 2'-deoxyribonucleoside 5'-phosphate + diphosphate + H(+). In terms of biological role, nucleoside triphosphate pyrophosphatase. May have a dual role in cell division arrest and in preventing the incorporation of modified nucleotides into cellular nucleic acids. The protein is Nucleoside triphosphate pyrophosphatase of Helicobacter pylori (strain P12).